The primary structure comprises 671 residues: UvrABC system protein B (671 aa).

Positions E26–R183 constitute a Helicase ATP-binding domain. An ATP-binding site is contributed by G39–T46. A Beta-hairpin motif is present at residues Y92–V115. Residues Q431–L597 enclose the Helicase C-terminal domain. The UVR domain maps to D631–Q666.

The protein belongs to the UvrB family. As to quaternary structure, forms a heterotetramer with UvrA during the search for lesions. Interacts with UvrC in an incision complex.

Its subcellular location is the cytoplasm. In terms of biological role, the UvrABC repair system catalyzes the recognition and processing of DNA lesions. A damage recognition complex composed of 2 UvrA and 2 UvrB subunits scans DNA for abnormalities. Upon binding of the UvrA(2)B(2) complex to a putative damaged site, the DNA wraps around one UvrB monomer. DNA wrap is dependent on ATP binding by UvrB and probably causes local melting of the DNA helix, facilitating insertion of UvrB beta-hairpin between the DNA strands. Then UvrB probes one DNA strand for the presence of a lesion. If a lesion is found the UvrA subunits dissociate and the UvrB-DNA preincision complex is formed. This complex is subsequently bound by UvrC and the second UvrB is released. If no lesion is found, the DNA wraps around the other UvrB subunit that will check the other stand for damage. This chain is UvrABC system protein B, found in Yersinia pseudotuberculosis serotype IB (strain PB1/+).